We begin with the raw amino-acid sequence, 526 residues long: MGDMASSTDPAAHNSFSDFNREEMTRLADNVRSLQRTNQDLSARNTKLAEMLKSSRDKLSMMYQQLEDMAQPPSLYGTFLEMSKDGTNAEIFAGGRRMRVAMSPMLCAGDLMPGVQVRLGEGNQILEACDFEQTGDLATLMEMIGRDRALISDRSGEERVVKLAGPLMDRTRKLPRPGDTLLVDRRAGYAFENIPKTEISKLALEEAPDVSYVDIGGLDDQIELIQDAVELPFLHPEMYRSYKLHPPKGVLLYGPPGCGKTLIAKAVANSLSQRIGDAGTSYFINVKGPELLNKYVGETERQIRVIFERARELAGDGRPVIIFFDEMESIFRTRGSGISSDMETTVVPQLLAELDGVEDLSNVIVIGATNREELIDPAILRPGRLDIKIRVQRPNRSGARDIFARYITDAIPLAAPVDELIDTAVDHLFTPRPYVRLTLIDGTVETLNYHDFVSGAMIANIVDRAKKSAIKDHIDGRTTGLSAEHLIHAIDQENQQSEDLPNTSNPDEWTRIIGRQGKRVAEVEVV.

Polar residues predominate over residues 1–18 (MGDMASSTDPAAHNSFSD). The segment at 1 to 20 (MGDMASSTDPAAHNSFSDFN) is disordered. Residues 20–59 (NREEMTRLADNVRSLQRTNQDLSARNTKLAEMLKSSRDKL) are a coiled coil. 257–262 (GCGKTL) provides a ligand contact to ATP.

This sequence belongs to the AAA ATPase family. In terms of assembly, homohexamer. Assembles into a hexameric ring structure.

The polypeptide is AAA ATPase forming ring-shaped complexes (Corynebacterium efficiens (strain DSM 44549 / YS-314 / AJ 12310 / JCM 11189 / NBRC 100395)).